Consider the following 265-residue polypeptide: Undecaprenyl-diphosphatase (265 aa).

A run of 7 helical transmembrane segments spans residues 42-62, 90-110, 115-135, 160-182, 195-215, 222-242, and 245-265; these read EAIPISIWLHLGTLLAAIVYF, ISFLLISTALTGIVGLPLLLF, VEISGGSATAVIGIMLIVTGI, VAQGFAAIPGISRSGITMSALLL, FLMSIPAVLVAEIGVGLMGMV, IVGLFFAFAFGLVTIDLFLKV, and KVDFSYFCIGLGVLSVLTMFL.

Belongs to the UppP family.

Its subcellular location is the cell membrane. The enzyme catalyses di-trans,octa-cis-undecaprenyl diphosphate + H2O = di-trans,octa-cis-undecaprenyl phosphate + phosphate + H(+). Catalyzes the dephosphorylation of undecaprenyl diphosphate (UPP). The sequence is that of Undecaprenyl-diphosphatase from Methanococcoides burtonii (strain DSM 6242 / NBRC 107633 / OCM 468 / ACE-M).